The chain runs to 621 residues: Putative zinc metalloprotease CPn_0344/CP_0416/CPj0344/CpB0350 (621 aa).

Position 20 (histidine 20) interacts with Zn(2+). Glutamate 21 is a catalytic residue. Histidine 24 is a Zn(2+) binding site. Helical transmembrane passes span 103–125 (ILVL…SILY), 561–583 (VLNL…WEIV), and 596–613 (ILVP…FLTF).

Belongs to the peptidase M50B family. It depends on Zn(2+) as a cofactor.

Its subcellular location is the cell inner membrane. The chain is Putative zinc metalloprotease CPn_0344/CP_0416/CPj0344/CpB0350 from Chlamydia pneumoniae (Chlamydophila pneumoniae).